A 304-amino-acid polypeptide reads, in one-letter code: Non-structural maintenance of chromosomes element 3 homolog (304 aa).

Disordered regions lie at residues 1–82 and 285–304; these read MLQK…PRSQ and ALAD…APSS. Residues 32-43 are compositionally biased toward basic and acidic residues; it reads AGEDARVLRDGF. Phosphoserine occurs at positions 57, 60, and 64. Residues 60–80 are compositionally biased toward low complexity; sequence SQGPSPQGARRAQAAPAVGPR. The interval 78 to 304 is interaction with NSMCE1; sequence GPRSQKQLEL…PQPSGPAPSS (227 aa). The region spanning 85–285 is the MAGE domain; sequence LELKVSELVQ…KDWPAQYCEA (201 aa).

In terms of assembly, component of the SMC5-SMC6 complex which consists at least of SMC5, SMC6, NSMCE2, NSMCE1, NSMCE4A or EID3 and NSMCE3. NSMCE1, NSMCE4A or EID3 and NSMCE3 probably form a subcomplex that bridges the head domains of the SMC5:SMC6 heterodimer. Interacts with PJA1. Interacts with E2F1 (via C-terminus). Interacts with NGFR (via C-terminus). Interacts with NSMCE1. Interacts with NSMCE4. Interacts with SMC6. Interacts with EID3. Ubiquitous.

It localises to the cytoplasm. It is found in the nucleus. The protein localises to the chromosome. The protein resides in the telomere. In terms of biological role, component of the SMC5-SMC6 complex, a complex involved in repair of DNA double-strand breaks by homologous recombination. The complex may promote sister chromatid homologous recombination by recruiting the SMC1-SMC3 cohesin complex to double-strand breaks. The complex is required for telomere maintenance via recombination in ALT (alternative lengthening of telomeres) cell lines and mediates sumoylation of shelterin complex (telosome) components which is proposed to lead to shelterin complex disassembly in ALT-associated PML bodies (APBs). In vitro enhances ubiquitin ligase activity of NSMCE1. Proposed to act through recruitment and/or stabilization of the Ubl-conjugating enzyme (E2) at the E3:substrate complex. May be a growth suppressor that facilitates the entry of the cell into cell cycle arrest. This Homo sapiens (Human) protein is Non-structural maintenance of chromosomes element 3 homolog.